Here is a 175-residue protein sequence, read N- to C-terminus: Nucleoside diphosphate kinase 6 (175 aa).

Positions 15, 63, 91, 97, 111, and 121 each coordinate ATP. His-124 acts as the Pros-phosphohistidine intermediate in catalysis.

This sequence belongs to the NDK family. It depends on Mg(2+) as a cofactor.

It carries out the reaction a 2'-deoxyribonucleoside 5'-diphosphate + ATP = a 2'-deoxyribonucleoside 5'-triphosphate + ADP. It catalyses the reaction a ribonucleoside 5'-diphosphate + ATP = a ribonucleoside 5'-triphosphate + ADP. Its function is as follows. Major role in the synthesis of nucleoside triphosphates other than ATP. The ATP gamma phosphate is transferred to the NDP beta phosphate via a ping-pong mechanism, using a phosphorylated active-site intermediate. The polypeptide is Nucleoside diphosphate kinase 6 (nme6) (Danio rerio (Zebrafish)).